Consider the following 202-residue polypeptide: Holliday junction branch migration complex subunit RuvA (202 aa).

Residues 1-65 (MIAYVEGRLA…EDALELYGFA (65 aa)) form a domain I region. The domain II stretch occupies residues 66–144 (TWDERQTFIV…VEDLPAAAPL (79 aa)). Residues 145–155 (VTGGAPGGVFR) are flexible linker. Positions 155–202 (RDALAGLANLGYGEEEASHVLKDVLHGEPDLDVGGALRAALRALARGR) are domain III.

The protein belongs to the RuvA family. Homotetramer. Forms an RuvA(8)-RuvB(12)-Holliday junction (HJ) complex. HJ DNA is sandwiched between 2 RuvA tetramers; dsDNA enters through RuvA and exits via RuvB. An RuvB hexamer assembles on each DNA strand where it exits the tetramer. Each RuvB hexamer is contacted by two RuvA subunits (via domain III) on 2 adjacent RuvB subunits; this complex drives branch migration. In the full resolvosome a probable DNA-RuvA(4)-RuvB(12)-RuvC(2) complex forms which resolves the HJ.

The protein localises to the cytoplasm. Its function is as follows. The RuvA-RuvB-RuvC complex processes Holliday junction (HJ) DNA during genetic recombination and DNA repair, while the RuvA-RuvB complex plays an important role in the rescue of blocked DNA replication forks via replication fork reversal (RFR). RuvA specifically binds to HJ cruciform DNA, conferring on it an open structure. The RuvB hexamer acts as an ATP-dependent pump, pulling dsDNA into and through the RuvAB complex. HJ branch migration allows RuvC to scan DNA until it finds its consensus sequence, where it cleaves and resolves the cruciform DNA. The sequence is that of Holliday junction branch migration complex subunit RuvA from Nitratidesulfovibrio vulgaris (strain ATCC 29579 / DSM 644 / CCUG 34227 / NCIMB 8303 / VKM B-1760 / Hildenborough) (Desulfovibrio vulgaris).